A 232-amino-acid chain; its full sequence is Ubiquinone biosynthesis O-methyltransferase (232 aa).

S-adenosyl-L-methionine is bound by residues arginine 36, glycine 55, aspartate 76, and leucine 120.

This sequence belongs to the methyltransferase superfamily. UbiG/COQ3 family.

It catalyses the reaction a 3-demethylubiquinol + S-adenosyl-L-methionine = a ubiquinol + S-adenosyl-L-homocysteine + H(+). The catalysed reaction is a 3-(all-trans-polyprenyl)benzene-1,2-diol + S-adenosyl-L-methionine = a 2-methoxy-6-(all-trans-polyprenyl)phenol + S-adenosyl-L-homocysteine + H(+). Its pathway is cofactor biosynthesis; ubiquinone biosynthesis. Its function is as follows. O-methyltransferase that catalyzes the 2 O-methylation steps in the ubiquinone biosynthetic pathway. In Pseudomonas fluorescens (strain SBW25), this protein is Ubiquinone biosynthesis O-methyltransferase.